We begin with the raw amino-acid sequence, 98 residues long: MKRILLALLRIYKIALSPYLGSRCRFWPTCSDYAREAVIQHGAARGSWMAACRLCRCHPFTQGGYDPVPGVETETAQTGKFAHPAAGHGPVTVRLPRP.

It belongs to the UPF0161 family.

The protein resides in the cell inner membrane. Could be involved in insertion of integral membrane proteins into the membrane. This is Putative membrane protein insertion efficiency factor from Cupriavidus pinatubonensis (strain JMP 134 / LMG 1197) (Cupriavidus necator (strain JMP 134)).